Reading from the N-terminus, the 197-residue chain is Fucoxanthin-chlorophyll a-c binding protein E, chloroplastic (197 aa).

The N-terminal 31 residues, 1–31, are a transit peptide targeting the chloroplast; that stretch reads MKFVVFASLLASAARFAPAQQSARTSVATNM. Transmembrane regions (helical) follow at residues 73 to 94, 114 to 134, and 174 to 196; these read ISML…PGDI, ISGA…LAVM, and GRAA…SLIP.

Belongs to the fucoxanthin chlorophyll protein family. The LHC complex of chromophytic algae is composed of fucoxanthin, chlorophyll A and C bound non-covalently by fucoxanthin chlorophyll proteins (FCPs). The ratio of the pigments in LHC; fucoxanthin: chlorophyll C: chlorophyll A; (0.6-1): (0.1-0.3): (1).

The protein resides in the plastid. Its subcellular location is the chloroplast thylakoid membrane. The light-harvesting complex (LHC) functions as a light receptor, it captures and delivers excitation energy to photosystems with which it is closely associated. Energy is transferred from the carotenoid and chlorophyll C (or B) to chlorophyll A and the photosynthetic reaction centers where it is used to synthesize ATP and reducing power. The polypeptide is Fucoxanthin-chlorophyll a-c binding protein E, chloroplastic (FCPE) (Phaeodactylum tricornutum (Diatom)).